We begin with the raw amino-acid sequence, 589 residues long: ATP-dependent lipid A-core flippase (589 aa).

The next 5 membrane-spanning stretches (helical) occupy residues 29 to 49 (WLLVVAACGALLEAVAGSTFL), 68 to 88 (ALWLPLGIVGLFLLRGIAGYI), 157 to 177 (VIGALVVMLWYSWTVTLAILL), 254 to 274 (ISSAAVQLLGAVGLAMLLLIA), and 283 to 303 (LSPGDFVSLMTSMIAVIPALK). The 283-residue stretch at 32 to 314 (VVAACGALLE…LTNVQNMLQS (283 aa)) folds into the ABC transmembrane type-1 domain. Positions 346–582 (IEFRGITARY…DGLYAYLYSM (237 aa)) constitute an ABC transporter domain. 380 to 387 (GRSGSGKS) contributes to the ATP binding site.

This sequence belongs to the ABC transporter superfamily. Lipid exporter (TC 3.A.1.106) family. In terms of assembly, homodimer.

The protein resides in the cell inner membrane. The enzyme catalyses ATP + H2O + lipid A-core oligosaccharideSide 1 = ADP + phosphate + lipid A-core oligosaccharideSide 2.. Its function is as follows. Involved in lipopolysaccharide (LPS) biosynthesis. Translocates lipid A-core from the inner to the outer leaflet of the inner membrane. Transmembrane domains (TMD) form a pore in the inner membrane and the ATP-binding domain (NBD) is responsible for energy generation. The protein is ATP-dependent lipid A-core flippase of Xylella fastidiosa (strain Temecula1 / ATCC 700964).